Consider the following 232-residue polypeptide: Small ribosomal subunit protein uS2 (232 aa).

The protein belongs to the universal ribosomal protein uS2 family.

This chain is Small ribosomal subunit protein uS2, found in Alkaliphilus oremlandii (strain OhILAs) (Clostridium oremlandii (strain OhILAs)).